Reading from the N-terminus, the 95-residue chain is Aspartyl/glutamyl-tRNA(Asn/Gln) amidotransferase subunit C (95 aa).

This sequence belongs to the GatC family. Heterotrimer of A, B and C subunits.

The catalysed reaction is L-glutamyl-tRNA(Gln) + L-glutamine + ATP + H2O = L-glutaminyl-tRNA(Gln) + L-glutamate + ADP + phosphate + H(+). It catalyses the reaction L-aspartyl-tRNA(Asn) + L-glutamine + ATP + H2O = L-asparaginyl-tRNA(Asn) + L-glutamate + ADP + phosphate + 2 H(+). Allows the formation of correctly charged Asn-tRNA(Asn) or Gln-tRNA(Gln) through the transamidation of misacylated Asp-tRNA(Asn) or Glu-tRNA(Gln) in organisms which lack either or both of asparaginyl-tRNA or glutaminyl-tRNA synthetases. The reaction takes place in the presence of glutamine and ATP through an activated phospho-Asp-tRNA(Asn) or phospho-Glu-tRNA(Gln). This is Aspartyl/glutamyl-tRNA(Asn/Gln) amidotransferase subunit C from Marinobacter nauticus (strain ATCC 700491 / DSM 11845 / VT8) (Marinobacter aquaeolei).